A 435-amino-acid chain; its full sequence is MAKRTLGLAKAAKAKKQKREEKSESPEKDSGNEEEQLTVELPEGATDEISQLIGLHQTYLQSERDNELLVNGIIHECDRLLRSNEDGKEELPAIFHSIYATALAELSKFVEEEEEEEKKEKEEQESDKKIKEFFDAALERIEIGLEKHPNDVNLLIAKSKILIDQIVLQYISPLSVDSKKKEIEVEVEKLLDTALEIYELAEVKANESKNYEVFNDLETLDILQALDDLLDIVDNFGKNNLEEEEEDEDEETEKDNGDDEDEVEIELTEDHPLYVIKTSDKYNQWWRDHTHTYLDNLKKLDSKDVLPEVLREVNHRLGQSYLQESEIPTTVFTTLKYDDEYDGAKELEGLTVEEAQKISQDLISKALKYLKGAKDEEDPETWVDIAEAMITLGNLHDIDSKEQEDLYKEAEEILKKANNATNGKFKDILENLLEN.

2 disordered regions span residues 1 to 44 (MAKR…LPEG) and 239 to 263 (NNLE…EDEV). A compositionally biased stretch (basic and acidic residues) spans 18–31 (KREEKSESPEKDSG). Acidic residues predominate over residues 242–263 (EEEEEDEDEETEKDNGDDEDEV).

Belongs to the ETT1 family.

The protein resides in the nucleus. Required for correct translation termination and probably involved in regulation of hypoxic gene expression. This is Enhancer of translation termination 1 (ETT1) from Candida tropicalis (strain ATCC MYA-3404 / T1) (Yeast).